The following is a 744-amino-acid chain: Catalase-peroxidase (744 aa).

A cross-link (tryptophyl-tyrosyl-methioninium (Trp-Tyr) (with M-257)) is located at residues 108–231 (WHSAGTYRIS…LAAVQMGLIY (124 aa)). His-109 functions as the Proton acceptor in the catalytic mechanism. A cross-link (tryptophyl-tyrosyl-methioninium (Tyr-Met) (with W-108)) is located at residues 231–257 (YVNPEGPNGNPDPIAAARDIRETFRRM). Residue His-272 participates in heme b binding. The interval 353–372 (ANQWKPKDGAGAGTVPDAHD) is disordered.

Belongs to the peroxidase family. Peroxidase/catalase subfamily. As to quaternary structure, homodimer or homotetramer. The cofactor is heme b. Post-translationally, formation of the three residue Trp-Tyr-Met cross-link is important for the catalase, but not the peroxidase activity of the enzyme.

The enzyme catalyses H2O2 + AH2 = A + 2 H2O. The catalysed reaction is 2 H2O2 = O2 + 2 H2O. Functionally, bifunctional enzyme with both catalase and broad-spectrum peroxidase activity. The protein is Catalase-peroxidase of Frankia casuarinae (strain DSM 45818 / CECT 9043 / HFP020203 / CcI3).